The chain runs to 463 residues: MKQILVVGDLIADYYLWGRSERLSPEAPVPVLEVQRESKNLGGAANVANNLISLKAKVFLCGVVGDDLEGEHFINALKARNIDTSCILTDKTRCTTLKTRIIAQNQQIVRVDKEIKDPLNADLRKKLLDFFTEKIQEIDGVILSDYNKGVLDFELTQKMIALANKHHKLILCDPKGKDYSKYAHASLITPNRIELEHALHLKLDSHANLSKALQILKETYHIAMPLVTLSEQGIAFLEKGELVNCPTIAKEVYDVTGAGDTVIASLTLSLLESMSLKEACEFANAAAAVVVGKMGSALASLEEIALILNQTHPKILPLEKLLETLEHHQQKIVFTNGCFDILHKGHASYLQKAKALGDILIVGLNSDASVKRLKGDKRPIVSEKDRAFLLASLSCVDYVVVFEEDTPIKLIQALKPDILVKGADYLNKEIIGSEFAKETRLMEFEEGYSTSAIIERIKRTCND.

The ribokinase stretch occupies residues 1–311 (MKQILVVGDL…EEIALILNQT (311 aa)). An ATP-binding site is contributed by 191–194 (NRIE). Residue Asp-260 is part of the active site. Residues 334-463 (FTNGCFDILH…IERIKRTCND (130 aa)) are cytidylyltransferase.

In the N-terminal section; belongs to the carbohydrate kinase PfkB family. It in the C-terminal section; belongs to the cytidylyltransferase family. In terms of assembly, homodimer.

The enzyme catalyses D-glycero-beta-D-manno-heptose 7-phosphate + ATP = D-glycero-beta-D-manno-heptose 1,7-bisphosphate + ADP + H(+). It catalyses the reaction D-glycero-beta-D-manno-heptose 1-phosphate + ATP + H(+) = ADP-D-glycero-beta-D-manno-heptose + diphosphate. The protein operates within nucleotide-sugar biosynthesis; ADP-L-glycero-beta-D-manno-heptose biosynthesis; ADP-L-glycero-beta-D-manno-heptose from D-glycero-beta-D-manno-heptose 7-phosphate: step 1/4. It participates in nucleotide-sugar biosynthesis; ADP-L-glycero-beta-D-manno-heptose biosynthesis; ADP-L-glycero-beta-D-manno-heptose from D-glycero-beta-D-manno-heptose 7-phosphate: step 3/4. Functionally, catalyzes the phosphorylation of D-glycero-D-manno-heptose 7-phosphate at the C-1 position to selectively form D-glycero-beta-D-manno-heptose-1,7-bisphosphate. Catalyzes the ADP transfer from ATP to D-glycero-beta-D-manno-heptose 1-phosphate, yielding ADP-D-glycero-beta-D-manno-heptose. The polypeptide is Bifunctional protein HldE (Helicobacter pylori (strain Shi470)).